A 529-amino-acid chain; its full sequence is GTPase Obg (529 aa).

The Obg domain occupies 2–159 (PTFVDRVVLH…LDAVLELKTV (158 aa)). A disordered region spans residues 62–86 (FHPHQRASRGRPGQGSNRHGADGAD). The OBG-type G domain maps to 160–332 (ADVALVGFPS…LSLALADLVA (173 aa)). Residues 166–173 (GFPSAGKS), 191–195 (FTTLV), 213–216 (DVPG), 284–287 (NKID), and 313–315 (STA) contribute to the GTP site. Residues Ser173 and Thr193 each coordinate Mg(2+). The OCT domain occupies 350–427 (PRAVNEPDFT…IGEVTFDWEP (78 aa)). Disordered stretches follow at residues 434–494 (LGNG…DRLR) and 506–529 (ARRA…EEEG). Low complexity-rich tracts occupy residues 461 to 472 (AGTAASGAAPSP) and 508 to 520 (RAAA…VRGE).

Belongs to the TRAFAC class OBG-HflX-like GTPase superfamily. OBG GTPase family. Monomer. Requires Mg(2+) as cofactor.

It is found in the cytoplasm. Functionally, an essential GTPase which binds GTP, GDP and possibly (p)ppGpp with moderate affinity, with high nucleotide exchange rates and a fairly low GTP hydrolysis rate. Plays a role in control of the cell cycle, stress response, ribosome biogenesis and in those bacteria that undergo differentiation, in morphogenesis control. The protein is GTPase Obg of Frankia casuarinae (strain DSM 45818 / CECT 9043 / HFP020203 / CcI3).